An 860-amino-acid polypeptide reads, in one-letter code: Leucine--tRNA ligase (860 aa).

Residues 42 to 52 (PYPSGRLHMGH) carry the 'HIGH' region motif. Residues 619-623 (KMSKS) carry the 'KMSKS' region motif. Residue K622 coordinates ATP.

It belongs to the class-I aminoacyl-tRNA synthetase family.

It localises to the cytoplasm. It catalyses the reaction tRNA(Leu) + L-leucine + ATP = L-leucyl-tRNA(Leu) + AMP + diphosphate. The sequence is that of Leucine--tRNA ligase from Pectobacterium carotovorum subsp. carotovorum (strain PC1).